The sequence spans 236 residues: WUSCHEL-related homeobox 4 (236 aa).

The homeobox; WUS-type DNA-binding region spans Ala-88 to Gln-152. Positions Pro-169–Asp-188 are disordered. The segment covering Glu-174–Glu-187 has biased composition (basic and acidic residues).

It belongs to the WUS homeobox family.

It is found in the nucleus. Transcription factor which may be involved in developmental processes. In Oryza sativa subsp. indica (Rice), this protein is WUSCHEL-related homeobox 4 (WOX4).